The chain runs to 298 residues: MSAQNSLFSGSIVALVTPMNHYGEVDFSCLEKLVEHHIEAGSNALVSVGTTGESATLSIEENVKVIEKTVEFAKGRIPIIAGAGANATSEAITMTKLLRDSGVAGCLSVVPYYNKPTQEGIYQHFKAIAECTNLPQILYNVPSRTGSDMKPETVARLAEIENIVGIKEATGDVSRIVKIKQLAGKNFIVLSGDDATGLEAIKLGAEGVISVTNNIAAKDMADMYRYALVGDFDKAEEINARLMRLHHDLFIESNPIPVKWAAYRLGLIKSSHLRLPLTTLSEEIQPKVEDALKIAGLL.

A pyruvate-binding site is contributed by Thr-51. The Proton donor/acceptor role is filled by Tyr-139. Lys-167 acts as the Schiff-base intermediate with substrate in catalysis. Residue Ile-209 participates in pyruvate binding.

Belongs to the DapA family. As to quaternary structure, homotetramer; dimer of dimers.

It localises to the cytoplasm. It carries out the reaction L-aspartate 4-semialdehyde + pyruvate = (2S,4S)-4-hydroxy-2,3,4,5-tetrahydrodipicolinate + H2O + H(+). It participates in amino-acid biosynthesis; L-lysine biosynthesis via DAP pathway; (S)-tetrahydrodipicolinate from L-aspartate: step 3/4. Its function is as follows. Catalyzes the condensation of (S)-aspartate-beta-semialdehyde [(S)-ASA] and pyruvate to 4-hydroxy-tetrahydrodipicolinate (HTPA). The polypeptide is 4-hydroxy-tetrahydrodipicolinate synthase (Haemophilus influenzae (strain PittGG)).